Consider the following 312-residue polypeptide: Ornithine carbamoyltransferase (312 aa).

Carbamoyl phosphate-binding positions include 57–60 (STRT), Q84, R108, and 135–138 (HPCQ). Residues N166, D226, and 230-231 (SM) each bind L-ornithine. Residues 265 to 266 (CL) and R293 contribute to the carbamoyl phosphate site.

It belongs to the aspartate/ornithine carbamoyltransferase superfamily. OTCase family.

Its subcellular location is the cytoplasm. The enzyme catalyses carbamoyl phosphate + L-ornithine = L-citrulline + phosphate + H(+). Its pathway is amino-acid degradation; L-arginine degradation via ADI pathway; carbamoyl phosphate from L-arginine: step 2/2. In terms of biological role, reversibly catalyzes the transfer of the carbamoyl group from carbamoyl phosphate (CP) to the N(epsilon) atom of ornithine (ORN) to produce L-citrulline. This is Ornithine carbamoyltransferase from Brucella abortus (strain 2308).